The primary structure comprises 27 residues: Pregnancy-associated glycoprotein 62 (27 aa).

This sequence belongs to the peptidase A1 family. Glycosylated. As to expression, placenta.

The polypeptide is Pregnancy-associated glycoprotein 62 (PAG62) (Capra hircus (Goat)).